The primary structure comprises 150 residues: Arginine repressor (150 aa).

This sequence belongs to the ArgR family.

The protein resides in the cytoplasm. The protein operates within amino-acid biosynthesis; L-arginine biosynthesis [regulation]. Its function is as follows. Regulates arginine biosynthesis genes. The chain is Arginine repressor from Carboxydothermus hydrogenoformans (strain ATCC BAA-161 / DSM 6008 / Z-2901).